The sequence spans 360 residues: sn-glycerol-3-phosphate import ATP-binding protein UgpC (360 aa).

The ABC transporter domain occupies 4-235 (LSLKGVKKSY…PATTFVASFI (232 aa)). 37-44 (GPSGCGKS) contributes to the ATP binding site.

The protein belongs to the ABC transporter superfamily. sn-glycerol-3-phosphate importer (TC 3.A.1.1.3) family. In terms of assembly, the complex is composed of two ATP-binding proteins (UgpC), two transmembrane proteins (UgpA and UgpE) and a solute-binding protein (UgpB).

The protein resides in the cell inner membrane. The catalysed reaction is sn-glycerol 3-phosphate(out) + ATP + H2O = sn-glycerol 3-phosphate(in) + ADP + phosphate + H(+). Part of the ABC transporter complex UgpBAEC involved in sn-glycerol-3-phosphate (G3P) import. Responsible for energy coupling to the transport system. This chain is sn-glycerol-3-phosphate import ATP-binding protein UgpC, found in Burkholderia mallei (strain ATCC 23344).